The sequence spans 218 residues: 3,4-dihydroxy-2-butanone 4-phosphate synthase (218 aa).

Residues 38 to 39, aspartate 43, 151 to 155, and glutamate 175 each bind D-ribulose 5-phosphate; these read RE and RRGHT. Position 39 (glutamate 39) interacts with Mg(2+). Histidine 154 lines the Mg(2+) pocket.

This sequence belongs to the DHBP synthase family. As to quaternary structure, homodimer. Mg(2+) serves as cofactor. It depends on Mn(2+) as a cofactor.

The enzyme catalyses D-ribulose 5-phosphate = (2S)-2-hydroxy-3-oxobutyl phosphate + formate + H(+). Its pathway is cofactor biosynthesis; riboflavin biosynthesis; 2-hydroxy-3-oxobutyl phosphate from D-ribulose 5-phosphate: step 1/1. Functionally, catalyzes the conversion of D-ribulose 5-phosphate to formate and 3,4-dihydroxy-2-butanone 4-phosphate. In Shewanella frigidimarina (strain NCIMB 400), this protein is 3,4-dihydroxy-2-butanone 4-phosphate synthase.